We begin with the raw amino-acid sequence, 990 residues long: Sister chromatid cohesion protein PDS5 homolog E (990 aa).

5 HEAT repeats span residues 31–57 (DATLSLLEVMESLLATVEQDLSSSVQK), 58–96 (ALHPPMRALVSADLLRNPDSDVRVSVVSCLTEIMRITAP), 153–190 (DLVLEMFQRFLKIIRPDHPQLVLVSMETIMITVIDESE), 191–228 (EVPMDLLEILLTTVKKDSQDVSPAALTLVEKVLSSCTC), and 232–269 (PCIMEALKSSGTSLDMYSPVVSSICQSEFATTQAHNDV). The disordered stretch occupies residues 262–565 (TTQAHNDVKP…AGEEVESNTN (304 aa)). Residues 267–281 (NDVKPKDNEADEKIS) are compositionally biased toward basic and acidic residues. Positions 302–314 (KGTRSKRSARGGT) are enriched in basic residues. Composition is skewed to polar residues over residues 328–342 (EGLSESTDAETASGS) and 394–410 (VGQTNQSVVISLSSSGR). Composition is skewed to basic and acidic residues over residues 421 to 430 (TKMEETDHDV), 448 to 477 (PAKEDLTKSNVKKHEDGIKTGKSSKKEKAD), and 503 to 512 (VHSDAKKKNS). Residues 458-465 (VKKHEDGI) carry the Nuclear localization signal 1 motif. 2 consecutive short sequence motifs (nuclear localization signal) follow at residues 539 to 546 (TKKSEQAP) and 583 to 590 (DKKFYEGV). A disordered region spans residues 653-966 (KKRKIVSKNV…VGNEAEEDDQ (314 aa)). Low complexity predominate over residues 662 to 673 (VEPSSSPEVRSS). Short sequence motifs (nuclear localization signal) lie at residues 677 to 684 (MKKKDSVT) and 715 to 722 (LKKLNGEP). Residues 727–742 (GRTGKKQKVTQAMHRK) are compositionally biased toward basic residues. Acidic residues predominate over residues 746-760 (DCDEQEDLETKDEED). 3 stretches are compositionally biased toward basic and acidic residues: residues 761–810 (SLKL…KTNG), 819–890 (TDGK…KETN), and 898–947 (EEQK…DKET).

This sequence belongs to the PDS5 family. Interacts with the cohesin complex.

Its subcellular location is the nucleus. Cohesin cofactor dispensable during the meiotic division but playing an important role in DNA repair by homologous recombination (HR) probably by helping SMC5/SMC6 complex. Regulator of sister chromatid cohesion in mitosis which may stabilize cohesin complex association with chromatin. May couple sister chromatid cohesion during mitosis to DNA replication. Cohesion ensures that chromosome partitioning is accurate in both meiotic and mitotic cells and plays an important role in DNA repair. The sequence is that of Sister chromatid cohesion protein PDS5 homolog E from Arabidopsis thaliana (Mouse-ear cress).